Here is a 690-residue protein sequence, read N- to C-terminus: NF-kappa-B-repressing factor (690 aa).

Residues methionine 1–valine 296 are active repression domain. The Nuclear localization signal motif lies at lysine 25–lysine 45. Disordered regions lie at residues serine 27–threonine 87 and methionine 132–proline 163. A Glycyl lysine isopeptide (Lys-Gly) (interchain with G-Cter in SUMO2) cross-link involves residue lysine 68. Low complexity predominate over residues serine 142–proline 163. The DNA-binding element occupies valine 296–alanine 388. Positions proline 414–arginine 431 are enriched in polar residues. The tract at residues proline 414–lysine 437 is disordered. A Glycyl lysine isopeptide (Lys-Gly) (interchain with G-Cter in SUMO2) cross-link involves residue lysine 500. One can recognise a G-patch domain in the interval glutamate 551 to glutamate 596. Positions lysine 600–arginine 664 constitute an R3H domain. Residue serine 618 is modified to Phosphoserine. Glycyl lysine isopeptide (Lys-Gly) (interchain with G-Cter in SUMO2) cross-links involve residues lysine 666 and lysine 674.

Interacts with NF-kappa-B. Interacts with XRN2. Interacts (via G-patch domain) with DHX15; promoting the RNA helicase activity of DHX15. As to expression, widely and constitutively expressed. Expressed at lower level in colon, peripheral blood lymphocytes, lung and kidney.

It localises to the nucleus. The protein resides in the nucleolus. Enhances the ATPase activity of DHX15 by acting like a brace that tethers mobile sections of DHX15 together, stabilizing a functional conformation with high RNA affinity of DHX15. Involved in the constitutive silencing of the interferon beta promoter, independently of the virus-induced signals, and in the inhibition of the basal and cytokine-induced iNOS promoter activity. Also involved in the regulation of IL-8 transcription. May also act as a DNA-binding transcription regulator: interacts with a specific negative regulatory element (NRE) 5'-AATTCCTCTGA-3' to mediate transcriptional repression of certain NK-kappa-B responsive genes. The protein is NF-kappa-B-repressing factor of Homo sapiens (Human).